The primary structure comprises 384 residues: Sphingosine kinase 1 (384 aa).

In terms of domain architecture, DAGKc spans 12–159; the sequence is PRPCRVLVLL…MNLLSLHTAS (148 aa). Residues 22–24 and 54–58 each bind ATP; these read NPR and TERRN. 79–82 provides a ligand contact to substrate; the sequence is SGDG. The active-site Proton donor/acceptor is aspartate 81. Residues glutamate 86 and 111-113 each bind ATP; that span reads GSG. Short sequence motifs (nuclear export signal) lie at residues 147–155 and 161–169; these read LSPMNLLSL and LRLFSVLSL. A substrate-binding site is contributed by aspartate 178. ATP is bound by residues arginine 185 and arginine 191. Residue threonine 193 is modified to Phosphothreonine. The residue at position 225 (serine 225) is a Phosphoserine. 341-343 contacts ATP; that stretch reads DGE.

Interacts with ACY1. Binds to calmodulin. Interacts with SPHKAP. Interacts with CIB1, the interaction occurs in a calcium-dependent manner. Interacts with TRAF2. Interacts with EEF1A1; the interaction enhances SPHK1 kinase activity. Requires Mg(2+) as cofactor. As to expression, widely expressed with highest levels in adult liver, kidney, heart and skeletal muscle. Expressed in brain cortex (at protein level).

Its subcellular location is the cytoplasm. The protein localises to the nucleus. It is found in the cell membrane. The protein resides in the endosome membrane. It localises to the membrane. Its subcellular location is the clathrin-coated pit. The protein localises to the synapse. It carries out the reaction a sphingoid base + ATP = a sphingoid 1-phosphate + ADP + H(+). The catalysed reaction is L-seryl-[protein] + acetyl-CoA = O-acetyl-L-seryl-[protein] + CoA. It catalyses the reaction sphinganine + ATP = sphinganine 1-phosphate + ADP + H(+). The enzyme catalyses sphing-4-enine + ATP = sphing-4-enine 1-phosphate + ADP + H(+). It carries out the reaction 1-O-hexadecyl-2-amino-sn-glycerol + ATP = 1-O-hexadecyl-2-desoxy-2-amino-sn-glycero-3-phosphate + ADP + H(+). With respect to regulation, acetyltransferase activity increases in presence of the kinase substrate, sphingosine. In Purkinje cells, kinase activity on sphingosine increases in presence of VEGFA. In neurons, kinase activity increases during the first 24h in presence of Amyloid-beta protein 42 to decrease after 96h. Its function is as follows. Catalyzes the phosphorylation of sphingosine to form sphingosine 1-phosphate (SPP), a lipid mediator with both intra- and extracellular functions. Also acts on D-erythro-sphingosine and to a lesser extent sphinganine, but not other lipids, such as D,L-threo-dihydrosphingosine, N,N-dimethylsphingosine, diacylglycerol, ceramide, or phosphatidylinositol. In contrast to proapoptotic SPHK2, has a negative effect on intracellular ceramide levels, enhances cell growth and inhibits apoptosis. Involved in the regulation of inflammatory response and neuroinflammation. Via the product sphingosine 1-phosphate, stimulates TRAF2 E3 ubiquitin ligase activity, and promotes activation of NF-kappa-B in response to TNF signaling leading to IL17 secretion. In response to TNF and in parallel to NF-kappa-B activation, negatively regulates RANTES induction through p38 MAPK signaling pathway. Involved in endocytic membrane trafficking induced by sphingosine, recruited to dilate endosomes, also plays a role on later stages of endosomal maturation and membrane fusion independently of its kinase activity. In Purkinje cells, seems to be also involved in the regulation of autophagosome-lysosome fusion upon VEGFA. Has serine acetyltransferase activity on PTGS2/COX2 in an acetyl-CoA dependent manner. The acetyltransferase activity increases in presence of the kinase substrate, sphingosine. During neuroinflammation, through PTGS2 acetylation, promotes neuronal secretion of specialized preresolving mediators (SPMs), especially 15-R-lipoxin A4, which results in an increase of phagocytic microglia. This chain is Sphingosine kinase 1, found in Homo sapiens (Human).